A 149-amino-acid chain; its full sequence is uncharacterized protein (149 aa).

Residues 111–140 (HKALEKATELIENEEELLKREGIKRENLKF) adopt a coiled-coil conformation.

This is an uncharacterized protein from Aquifex aeolicus (strain VF5).